The following is a 234-amino-acid chain: Short neuropeptide F (234 aa).

The first 22 residues, methionine 1–serine 22, serve as a signal peptide directing secretion. The propeptide occupies glutamate 23–lysine 56. A phenylalanine amide mark is found at phenylalanine 69 and phenylalanine 101. Tryptophan amide is present on tryptophan 132. Phenylalanine 165 is modified (phenylalanine amide). The segment covering threonine 181–asparagine 190 has biased composition (polar residues). The segment at threonine 181–lysine 234 is disordered. Tryptophan amide is present on tryptophan 204. Residues serine 207–lysine 234 constitute a propeptide that is removed on maturation.

This sequence belongs to the NPY family. Expressed in all body parts of larva, pupae and adults.

It localises to the secreted. Its function is as follows. Plays a role in controlling food intake and regulating body size. This chain is Short neuropeptide F, found in Anopheles gambiae (African malaria mosquito).